The chain runs to 474 residues: 3-isopropylmalate dehydratase large subunit (474 aa).

[4Fe-4S] cluster contacts are provided by cysteine 352, cysteine 413, and cysteine 416.

The protein belongs to the aconitase/IPM isomerase family. LeuC type 1 subfamily. Heterodimer of LeuC and LeuD. [4Fe-4S] cluster serves as cofactor.

The catalysed reaction is (2R,3S)-3-isopropylmalate = (2S)-2-isopropylmalate. It participates in amino-acid biosynthesis; L-leucine biosynthesis; L-leucine from 3-methyl-2-oxobutanoate: step 2/4. Catalyzes the isomerization between 2-isopropylmalate and 3-isopropylmalate, via the formation of 2-isopropylmaleate. The chain is 3-isopropylmalate dehydratase large subunit from Pseudomonas syringae pv. syringae (strain B728a).